We begin with the raw amino-acid sequence, 340 residues long: Solute carrier family 35 member G3 (340 aa).

The interval 11–31 (PDFTQPSPPSTPSSLTSNHHN) is disordered. 9 helical membrane passes run 39 to 59 (TKGL…VGPF), 69 to 89 (LPSL…ALIL), 107 to 127 (FLHA…VQVV), 160 to 180 (AWCG…PGLG), 189 to 209 (LYTA…SLGL), 223 to 243 (TVAF…LFVL), 257 to 277 (CMVA…YAVT), 283 to 303 (LVCA…YYVL), and 307 to 327 (VAPS…IITA). In terms of domain architecture, EamA 1 spans 51–176 (LSAGFVGPFS…STLGLIIIVG (126 aa)). Residues 223-327 (TVAFLFGLVG…VLGSIAIITA (105 aa)) enclose the EamA 2 domain.

The protein belongs to the SLC35G solute transporter family.

It is found in the membrane. The chain is Solute carrier family 35 member G3 (Slc35g3) from Rattus norvegicus (Rat).